The chain runs to 417 residues: 4-hydroxy-3-methylbut-2-en-1-yl diphosphate synthase (flavodoxin) (417 aa).

Residues cysteine 304, cysteine 307, cysteine 350, and glutamate 357 each coordinate [4Fe-4S] cluster.

This sequence belongs to the IspG family. Requires [4Fe-4S] cluster as cofactor.

The catalysed reaction is (2E)-4-hydroxy-3-methylbut-2-enyl diphosphate + oxidized [flavodoxin] + H2O + 2 H(+) = 2-C-methyl-D-erythritol 2,4-cyclic diphosphate + reduced [flavodoxin]. It functions in the pathway isoprenoid biosynthesis; isopentenyl diphosphate biosynthesis via DXP pathway; isopentenyl diphosphate from 1-deoxy-D-xylulose 5-phosphate: step 5/6. Converts 2C-methyl-D-erythritol 2,4-cyclodiphosphate (ME-2,4cPP) into 1-hydroxy-2-methyl-2-(E)-butenyl 4-diphosphate. The protein is 4-hydroxy-3-methylbut-2-en-1-yl diphosphate synthase (flavodoxin) of Sinorhizobium medicae (strain WSM419) (Ensifer medicae).